The sequence spans 481 residues: Glutamyl-tRNA(Gln) amidotransferase subunit A (481 aa).

Catalysis depends on charge relay system residues Lys74 and Ser149. The Acyl-ester intermediate role is filled by Ser173.

This sequence belongs to the amidase family. GatA subfamily. Heterotrimer of A, B and C subunits.

It catalyses the reaction L-glutamyl-tRNA(Gln) + L-glutamine + ATP + H2O = L-glutaminyl-tRNA(Gln) + L-glutamate + ADP + phosphate + H(+). Allows the formation of correctly charged Gln-tRNA(Gln) through the transamidation of misacylated Glu-tRNA(Gln) in organisms which lack glutaminyl-tRNA synthetase. The reaction takes place in the presence of glutamine and ATP through an activated gamma-phospho-Glu-tRNA(Gln). The protein is Glutamyl-tRNA(Gln) amidotransferase subunit A of Francisella tularensis subsp. tularensis (strain FSC 198).